The sequence spans 397 residues: Iron-sulfur cluster assembly SufBD family protein Rv1462 (397 aa).

An N-acetylthreonine modification is found at threonine 2.

Belongs to the iron-sulfur cluster assembly SufBD family.

In Mycobacterium tuberculosis (strain ATCC 25618 / H37Rv), this protein is Iron-sulfur cluster assembly SufBD family protein Rv1462.